A 259-amino-acid polypeptide reads, in one-letter code: Cytochrome c oxidase subunit 3 (259 aa).

The next 7 helical transmembrane spans lie at 13–33 (PWPLTSSIGAFTLAIGLASWF), 36–56 (HGFLCLTLAAFLIIVSMIQWW), 80–100 (GMILFITSEVMFFLAFFWAFF), 125–145 (FSVPLLNTAVLLASGVTVTWA), 160–180 (ALILTVCLGAYFTFLQAGEYM), 195–215 (FFVATGFHGLHVLIGSSFLAI), and 237–257 (AWYWHFVDVVWICLYLCIYWW).

The protein belongs to the cytochrome c oxidase subunit 3 family. In terms of assembly, component of the cytochrome c oxidase (complex IV, CIV), a multisubunit enzyme composed of a catalytic core of 3 subunits and several supernumerary subunits. The complex exists as a monomer or a dimer and forms supercomplexes (SCs) in the inner mitochondrial membrane with ubiquinol-cytochrome c oxidoreductase (cytochrome b-c1 complex, complex III, CIII).

It localises to the mitochondrion inner membrane. It catalyses the reaction 4 Fe(II)-[cytochrome c] + O2 + 8 H(+)(in) = 4 Fe(III)-[cytochrome c] + 2 H2O + 4 H(+)(out). In terms of biological role, component of the cytochrome c oxidase, the last enzyme in the mitochondrial electron transport chain which drives oxidative phosphorylation. The respiratory chain contains 3 multisubunit complexes succinate dehydrogenase (complex II, CII), ubiquinol-cytochrome c oxidoreductase (cytochrome b-c1 complex, complex III, CIII) and cytochrome c oxidase (complex IV, CIV), that cooperate to transfer electrons derived from NADH and succinate to molecular oxygen, creating an electrochemical gradient over the inner membrane that drives transmembrane transport and the ATP synthase. Cytochrome c oxidase is the component of the respiratory chain that catalyzes the reduction of oxygen to water. Electrons originating from reduced cytochrome c in the intermembrane space (IMS) are transferred via the dinuclear copper A center (CU(A)) of subunit 2 and heme A of subunit 1 to the active site in subunit 1, a binuclear center (BNC) formed by heme A3 and copper B (CU(B)). The BNC reduces molecular oxygen to 2 water molecules using 4 electrons from cytochrome c in the IMS and 4 protons from the mitochondrial matrix. The sequence is that of Cytochrome c oxidase subunit 3 (COIII) from Lumbricus terrestris (Common earthworm).